Consider the following 510-residue polypeptide: D-alanine--D-alanyl carrier protein ligase (510 aa).

An ATP-binding site is contributed by 157 to 158; that stretch reads TS. Asp-202 lines the D-alanine pocket. 297 to 302 serves as a coordination point for ATP; it reads NTYGPT. Val-306 contacts D-alanine. Residues Asp-389 and Lys-498 each coordinate ATP. Position 498 (Lys-498) interacts with D-alanine.

Belongs to the ATP-dependent AMP-binding enzyme family. DltA subfamily.

The protein localises to the cytoplasm. The enzyme catalyses holo-[D-alanyl-carrier protein] + D-alanine + ATP = D-alanyl-[D-alanyl-carrier protein] + AMP + diphosphate. It participates in cell wall biogenesis; lipoteichoic acid biosynthesis. Catalyzes the first step in the D-alanylation of lipoteichoic acid (LTA), the activation of D-alanine and its transfer onto the D-alanyl carrier protein (Dcp) DltC. In an ATP-dependent two-step reaction, forms a high energy D-alanyl-AMP intermediate, followed by transfer of the D-alanyl residue as a thiol ester to the phosphopantheinyl prosthetic group of the Dcp. D-alanylation of LTA plays an important role in modulating the properties of the cell wall in Gram-positive bacteria, influencing the net charge of the cell wall. In Listeria monocytogenes serovar 1/2a (strain ATCC BAA-679 / EGD-e), this protein is D-alanine--D-alanyl carrier protein ligase.